Here is a 633-residue protein sequence, read N- to C-terminus: Phosphomethylpyrimidine synthase (633 aa).

Substrate is bound by residues Asn245, Met274, Tyr303, His339, 359 to 361, 400 to 403, and Glu439; these read SRG and DGLR. His443 serves as a coordination point for Zn(2+). Residue Tyr466 participates in substrate binding. Residue His507 coordinates Zn(2+). The [4Fe-4S] cluster site is built by Cys587, Cys590, and Cys595.

The protein belongs to the ThiC family. Homodimer. [4Fe-4S] cluster serves as cofactor.

The enzyme catalyses 5-amino-1-(5-phospho-beta-D-ribosyl)imidazole + S-adenosyl-L-methionine = 4-amino-2-methyl-5-(phosphooxymethyl)pyrimidine + CO + 5'-deoxyadenosine + formate + L-methionine + 3 H(+). Its pathway is cofactor biosynthesis; thiamine diphosphate biosynthesis. Catalyzes the synthesis of the hydroxymethylpyrimidine phosphate (HMP-P) moiety of thiamine from aminoimidazole ribotide (AIR) in a radical S-adenosyl-L-methionine (SAM)-dependent reaction. The polypeptide is Phosphomethylpyrimidine synthase (Neisseria meningitidis serogroup B (strain ATCC BAA-335 / MC58)).